The primary structure comprises 396 residues: Probable mannan endo-1,4-beta-mannosidase A-2 (396 aa).

A signal peptide spans 1–21; the sequence is MKVPRLLLALGGLASIHIASA. Substrate is bound at residue W99. N120 carries N-linked (GlcNAc...) asparagine glycosylation. Position 212 (N212) interacts with substrate. E213 acts as the Proton donor in catalysis. A glycan (N-linked (GlcNAc...) asparagine) is linked at N270. Y288 provides a ligand contact to substrate. Catalysis depends on E321, which acts as the Nucleophile. W351 serves as a coordination point for substrate.

Belongs to the glycosyl hydrolase 5 (cellulase A) family.

Its subcellular location is the secreted. The catalysed reaction is Random hydrolysis of (1-&gt;4)-beta-D-mannosidic linkages in mannans, galactomannans and glucomannans.. Functionally, endo-1,4-mannanase, a crucial enzyme for depolymerization of seed galactomannans and wood galactoglucomannans. The sequence is that of Probable mannan endo-1,4-beta-mannosidase A-2 (manA-2) from Aspergillus terreus (strain NIH 2624 / FGSC A1156).